The following is a 442-amino-acid chain: Putative mannan endo-1,6-alpha-mannosidase C970.02 (442 aa).

The first 19 residues, 1-19, serve as a signal peptide directing secretion; that stretch reads MSLTIFISLATILFSFAEA. Residues Asn-25, Asn-82, Asn-107, Asn-131, Asn-201, Asn-236, Asn-261, Asn-264, Asn-277, and Asn-361 are each glycosylated (N-linked (GlcNAc...) asparagine).

Belongs to the glycosyl hydrolase 76 family.

The enzyme catalyses Random hydrolysis of (1-&gt;6)-alpha-D-mannosidic linkages in unbranched (1-&gt;6)-mannans.. The polypeptide is Putative mannan endo-1,6-alpha-mannosidase C970.02 (Schizosaccharomyces pombe (strain 972 / ATCC 24843) (Fission yeast)).